Reading from the N-terminus, the 462-residue chain is Putative ABC transporter A445L (462 aa).

It belongs to the protein kinase superfamily. ADCK protein kinase family.

The polypeptide is Putative ABC transporter A445L (Chlorella (PBCV-1)).